We begin with the raw amino-acid sequence, 81 residues long: ATP synthase subunit c, chloroplastic (81 aa).

Helical transmembrane passes span P3–G23 and L57–A77.

Belongs to the ATPase C chain family. F-type ATPases have 2 components, F(1) - the catalytic core - and F(0) - the membrane proton channel. F(1) has five subunits: alpha(3), beta(3), gamma(1), delta(1), epsilon(1). F(0) has four main subunits: a(1), b(1), b'(1) and c(10-14). The alpha and beta chains form an alternating ring which encloses part of the gamma chain. F(1) is attached to F(0) by a central stalk formed by the gamma and epsilon chains, while a peripheral stalk is formed by the delta, b and b' chains.

The protein resides in the plastid. Its subcellular location is the chloroplast thylakoid membrane. Its function is as follows. F(1)F(0) ATP synthase produces ATP from ADP in the presence of a proton or sodium gradient. F-type ATPases consist of two structural domains, F(1) containing the extramembraneous catalytic core and F(0) containing the membrane proton channel, linked together by a central stalk and a peripheral stalk. During catalysis, ATP synthesis in the catalytic domain of F(1) is coupled via a rotary mechanism of the central stalk subunits to proton translocation. Functionally, key component of the F(0) channel; it plays a direct role in translocation across the membrane. A homomeric c-ring of between 10-14 subunits forms the central stalk rotor element with the F(1) delta and epsilon subunits. The chain is ATP synthase subunit c, chloroplastic from Pinus koraiensis (Korean pine).